The sequence spans 551 residues: Alkaline nuclease (551 aa).

Belongs to the herpesviridae alkaline nuclease family. As to quaternary structure, interacts with major DNA-binding protein; this interaction increases the nuclease processivity of the alkaline exonuclease.

It is found in the host nucleus. Its subcellular location is the host cytoplasm. Functionally, plays a role in processing non linear or branched viral DNA intermediates in order to promote the production of mature packaged unit-length linear progeny viral DNA molecules. Exhibits endonuclease and exonuclease activities and accepts both double-stranded and single-stranded DNA as substrate. Exonuclease digestion of DNA is in the 5'-&gt; 3' direction and the products are 5'-monophosphate nucleosides. Additionally, forms a recombinase with the major DNA-binding protein, which displays strand exchange activity. In Homo sapiens (Human), this protein is Alkaline nuclease.